Consider the following 156-residue polypeptide: Ribosome maturation factor RimP (156 aa).

This sequence belongs to the RimP family.

It localises to the cytoplasm. Functionally, required for maturation of 30S ribosomal subunits. In Exiguobacterium sp. (strain ATCC BAA-1283 / AT1b), this protein is Ribosome maturation factor RimP.